A 136-amino-acid chain; its full sequence is UPF0216 protein PF0452 (136 aa).

It belongs to the UPF0216 family.

The sequence is that of UPF0216 protein PF0452 from Pyrococcus furiosus (strain ATCC 43587 / DSM 3638 / JCM 8422 / Vc1).